We begin with the raw amino-acid sequence, 450 residues long: L-lysine-epsilon aminotransferase (450 aa).

The pyridoxal 5'-phosphate site is built by G127 and A128. 2-oxoglutarate-binding residues include R168 and Q274. R168 lines the L-lysine pocket. Q274 is a pyridoxal 5'-phosphate binding site. K300 carries the post-translational modification N6-(pyridoxal phosphate)lysine. R423 contributes to the 2-oxoglutarate binding site.

The protein belongs to the class-III pyridoxal-phosphate-dependent aminotransferase family. It depends on pyridoxal 5'-phosphate as a cofactor.

The enzyme catalyses L-lysine + 2-oxoglutarate = (S)-2-amino-6-oxohexanoate + L-glutamate. Its pathway is antibiotic biosynthesis; cephamycin C biosynthesis. Its function is as follows. Catalyzes the transfer of the terminal amino group of L-lysine to alpha-ketoglutarate to yield L-glutamate and 2-aminoadipate 6-semialdehyde ((S)-2-amino-6-oxohexanoate), which is spontaneously converted to the dehydrated form 1-piperideine 6-carboxylate. The sequence is that of L-lysine-epsilon aminotransferase from Amycolatopsis lactamdurans (Nocardia lactamdurans).